Reading from the N-terminus, the 470-residue chain is MGQSGRSRHQKRNRAQAQLRNLESYAAQPHSFVFTRGRAGRNVRQLSLDVRRVMEPLTATRLQVRKKNSLKDCVAVAGPLGVTHFLILTKTDNSVYLKLMRLPGGPTLTFQISKYTLIRDVVSSLRRHRMHEQQFNHPPLLVLNSFGPQGMHIKLMATMFQNLFPSINVHTVNLNTIKRCLLINYNPDSQELDFRHYSVKVVPVGASRGMKKLLQEKFPNMSRLQDISELLATGVGLSDSEVEPDGEHNTTELPQAVAGRGNMQAQQSAVRLTEIGPRMTLQLIKIQEGVGNGNVLFHSFVHKTEEELQAILAAKEEKLRLKAQRQNQQAENLQRKQELREAHKKKSLAGIKRARARADGDSDAEDPGAPPEAVGAGQPEDEEDDAEYFRQAVGEEPDEDLFPTAAKRRRQGGPLGKKQRGKEQRPGNKGRGQGGNWQALKLQGRSQRGKAKPRPRATHQDSRPASRRRN.

The Brix domain maps to Pro29–Asn292. Ser238 and Ser240 each carry phosphoserine. Disordered stretches follow at residues Ser240–Gln264 and Ala323–Asn470. Over residues Ala342–Arg355 the composition is skewed to basic residues. Ser362 is modified (phosphoserine). Residue Lys441 is modified to N6-acetyllysine. Residues Gln447–Ala457 show a composition bias toward basic residues.

The protein localises to the nucleus. The protein resides in the nucleolus. May have a role in cell growth. The polypeptide is Suppressor of SWI4 1 homolog (Ppan) (Mus musculus (Mouse)).